The chain runs to 233 residues: Cilia- and flagella-associated protein 299 (233 aa).

The protein localises to the cytoplasm. Its subcellular location is the nucleus. Its function is as follows. May be involved in spermatogenesis. The chain is Cilia- and flagella-associated protein 299 from Xenopus laevis (African clawed frog).